The chain runs to 102 residues: Integration host factor subunit beta (102 aa).

Belongs to the bacterial histone-like protein family. In terms of assembly, heterodimer of an alpha and a beta chain.

In terms of biological role, this protein is one of the two subunits of integration host factor, a specific DNA-binding protein that functions in genetic recombination as well as in transcriptional and translational control. This chain is Integration host factor subunit beta, found in Marinomonas sp. (strain MWYL1).